The sequence spans 354 residues: MNIWVIADDRTGNTHQAIALAAQLTGKYTTITLEYNFLAKLPNFLLQYYPIHIKRELLQDIIDKLPPDMIITAGRRTAVLAFYLKKKFENIKLVQIMQPNLPYNIFDAIILPYHDYRDLLYCGPAKILSKNIKSHCKVLNYSSRQHDIEKMMKIIPINGALNNITAKFSAASLELQKHYPHLKQFTAVIIGGNNKRFSFNEDIAILFSSLLNKIYSNQAIPFFISFSRRTPQIVKSIIKNNTHASTMIYDPSKDTDYNNPYIDMLANAKYIISTADSISMCSEAASSGKPLYIFYPPNFNSLKHKIFIEQLVEQKIARIFNESITMLEEYSYKPLNEAKKVAEIIKFALKINKS.

This is an uncharacterized protein from Rickettsia prowazekii (strain Madrid E).